We begin with the raw amino-acid sequence, 397 residues long: Enoyl-[acyl-carrier-protein] reductase [NADH] (397 aa).

NAD(+) contacts are provided by residues 48–53, 74–75, 111–112, and 139–140; these read GASTGY, FE, DA, and VA. Residue Tyr225 participates in substrate binding. Tyr235 serves as the catalytic Proton donor. NAD(+) contacts are provided by residues Lys244 and 273–275; that span reads VVT.

This sequence belongs to the TER reductase family. In terms of assembly, monomer.

It carries out the reaction a 2,3-saturated acyl-[ACP] + NAD(+) = a (2E)-enoyl-[ACP] + NADH + H(+). The protein operates within lipid metabolism; fatty acid biosynthesis. In terms of biological role, involved in the final reduction of the elongation cycle of fatty acid synthesis (FAS II). Catalyzes the reduction of a carbon-carbon double bond in an enoyl moiety that is covalently linked to an acyl carrier protein (ACP). The sequence is that of Enoyl-[acyl-carrier-protein] reductase [NADH] from Burkholderia pseudomallei (strain K96243).